Here is a 226-residue protein sequence, read N- to C-terminus: MTSPCKHGDRPPGRHDLVFVSPAGWRAMLDARDDLAADSLLARWPKMRWPTIRRRALPHEATGVALGLPLPPSAGKKRVALLVEIDHVASVARPPSLQQARAYAPRNWWPTLDRLDGLALRHSVDARVYGSLAWQSLTGLDYVTGRSDLDVLFEFRSETDIDRFVADVAAIETSAPMRLDGELMSADGAAVNWREVHGGASELLVKSIERVVLLDRHQFISGATGS.

Catalysis depends on residues Asp-148 and Asp-150.

This sequence belongs to the MdcG family.

It carries out the reaction apo-[malonate decarboxylase ACP] + 2'-(5''-triphospho-alpha-D-ribosyl)-3'-dephospho-CoA = holo-[malonate decarboxylase ACP] + diphosphate. Its function is as follows. Transfers 2'-(5-triphosphoribosyl)-3'-dephosphocoenzyme-A to the apo-[acyl-carrier-protein] of the malonate decarboxylase to yield holo-[acyl-carrier-protein]. The polypeptide is Phosphoribosyl-dephospho-CoA transferase (Bradyrhizobium diazoefficiens (strain JCM 10833 / BCRC 13528 / IAM 13628 / NBRC 14792 / USDA 110)).